Here is a 97-residue protein sequence, read N- to C-terminus: Aspartyl/glutamyl-tRNA(Asn/Gln) amidotransferase subunit C (97 aa).

This sequence belongs to the GatC family. As to quaternary structure, heterotrimer of A, B and C subunits.

The enzyme catalyses L-glutamyl-tRNA(Gln) + L-glutamine + ATP + H2O = L-glutaminyl-tRNA(Gln) + L-glutamate + ADP + phosphate + H(+). It catalyses the reaction L-aspartyl-tRNA(Asn) + L-glutamine + ATP + H2O = L-asparaginyl-tRNA(Asn) + L-glutamate + ADP + phosphate + 2 H(+). Allows the formation of correctly charged Asn-tRNA(Asn) or Gln-tRNA(Gln) through the transamidation of misacylated Asp-tRNA(Asn) or Glu-tRNA(Gln) in organisms which lack either or both of asparaginyl-tRNA or glutaminyl-tRNA synthetases. The reaction takes place in the presence of glutamine and ATP through an activated phospho-Asp-tRNA(Asn) or phospho-Glu-tRNA(Gln). The chain is Aspartyl/glutamyl-tRNA(Asn/Gln) amidotransferase subunit C from Prochlorococcus marinus (strain MIT 9313).